The chain runs to 404 residues: Cysteine desulfurase IscS (404 aa).

Residues 75–76 (AT), asparagine 155, glutamine 183, and 203–205 (SAH) each bind pyridoxal 5'-phosphate. An N6-(pyridoxal phosphate)lysine modification is found at lysine 206. Residue threonine 243 coordinates pyridoxal 5'-phosphate. Cysteine 328 acts as the Cysteine persulfide intermediate in catalysis. Cysteine 328 contacts [2Fe-2S] cluster.

Belongs to the class-V pyridoxal-phosphate-dependent aminotransferase family. NifS/IscS subfamily. In terms of assembly, homodimer. Forms a heterotetramer with IscU, interacts with other sulfur acceptors. Requires pyridoxal 5'-phosphate as cofactor.

The protein localises to the cytoplasm. It catalyses the reaction (sulfur carrier)-H + L-cysteine = (sulfur carrier)-SH + L-alanine. It functions in the pathway cofactor biosynthesis; iron-sulfur cluster biosynthesis. Master enzyme that delivers sulfur to a number of partners involved in Fe-S cluster assembly, tRNA modification or cofactor biosynthesis. Catalyzes the removal of elemental sulfur atoms from cysteine to produce alanine. Functions as a sulfur delivery protein for Fe-S cluster synthesis onto IscU, an Fe-S scaffold assembly protein, as well as other S acceptor proteins. In Shewanella woodyi (strain ATCC 51908 / MS32), this protein is Cysteine desulfurase IscS.